The chain runs to 319 residues: Pantothenate kinase (319 aa).

97–104 (GSVAVGKS) lines the ATP pocket.

Belongs to the prokaryotic pantothenate kinase family.

Its subcellular location is the cytoplasm. The enzyme catalyses (R)-pantothenate + ATP = (R)-4'-phosphopantothenate + ADP + H(+). The protein operates within cofactor biosynthesis; coenzyme A biosynthesis; CoA from (R)-pantothenate: step 1/5. This chain is Pantothenate kinase, found in Mesorhizobium japonicum (strain LMG 29417 / CECT 9101 / MAFF 303099) (Mesorhizobium loti (strain MAFF 303099)).